A 542-amino-acid chain; its full sequence is CTP synthase (542 aa).

The interval 1–265 (MARYVFITGG…DSEVLAAFGI (265 aa)) is amidoligase domain. CTP is bound at residue S13. Residue S13 coordinates UTP. Residue 14 to 19 (SLGKGI) coordinates ATP. Y54 lines the L-glutamine pocket. D71 provides a ligand contact to ATP. 2 residues coordinate Mg(2+): D71 and E139. CTP is bound by residues 146 to 148 (DIE), 186 to 191 (KTKPTQ), and K222. UTP is bound by residues 186–191 (KTKPTQ) and K222. The 251-residue stretch at 291–541 (TIAIVGKYTG…IAAAVEQSRL (251 aa)) folds into the Glutamine amidotransferase type-1 domain. Residue G353 coordinates L-glutamine. The active-site Nucleophile; for glutamine hydrolysis is C380. Residues 381–384 (FGMQ), E404, and R469 contribute to the L-glutamine site. Catalysis depends on residues H514 and E516.

It belongs to the CTP synthase family. As to quaternary structure, homotetramer.

It catalyses the reaction UTP + L-glutamine + ATP + H2O = CTP + L-glutamate + ADP + phosphate + 2 H(+). The enzyme catalyses L-glutamine + H2O = L-glutamate + NH4(+). It carries out the reaction UTP + NH4(+) + ATP = CTP + ADP + phosphate + 2 H(+). The protein operates within pyrimidine metabolism; CTP biosynthesis via de novo pathway; CTP from UDP: step 2/2. With respect to regulation, allosterically activated by GTP, when glutamine is the substrate; GTP has no effect on the reaction when ammonia is the substrate. The allosteric effector GTP functions by stabilizing the protein conformation that binds the tetrahedral intermediate(s) formed during glutamine hydrolysis. Inhibited by the product CTP, via allosteric rather than competitive inhibition. Catalyzes the ATP-dependent amination of UTP to CTP with either L-glutamine or ammonia as the source of nitrogen. Regulates intracellular CTP levels through interactions with the four ribonucleotide triphosphates. The sequence is that of CTP synthase from Chelativorans sp. (strain BNC1).